Here is a 710-residue protein sequence, read N- to C-terminus: Polyribonucleotide nucleotidyltransferase (710 aa).

Mg(2+) is bound by residues Asp487 and Asp493. The KH domain occupies 554–613 (PRIHTMKISAEKIKDVIGKGGAVIRALTEETGTTIEIEDDGTIKIAATEGAAAKEAIRRI). In terms of domain architecture, S1 motif spans 623 to 691 (GRIYTGKVAR…RQGRVRLSMK (69 aa)). The disordered stretch occupies residues 691–710 (KEAVEKPAEEANDASEAKGE).

Belongs to the polyribonucleotide nucleotidyltransferase family. As to quaternary structure, component of the RNA degradosome, which is a multiprotein complex involved in RNA processing and mRNA degradation. Requires Mg(2+) as cofactor.

The protein localises to the cytoplasm. The enzyme catalyses RNA(n+1) + phosphate = RNA(n) + a ribonucleoside 5'-diphosphate. Its function is as follows. Involved in mRNA degradation. Catalyzes the phosphorolysis of single-stranded polyribonucleotides processively in the 3'- to 5'-direction. The polypeptide is Polyribonucleotide nucleotidyltransferase (Vibrio campbellii (strain ATCC BAA-1116)).